A 397-amino-acid polypeptide reads, in one-letter code: Acetate kinase (397 aa).

Residue asparagine 8 participates in Mg(2+) binding. Lysine 15 lines the ATP pocket. Residue arginine 89 coordinates substrate. Aspartate 146 acts as the Proton donor/acceptor in catalysis. ATP-binding positions include 206 to 210, 281 to 283, and 329 to 333; these read HLGNG, DLR, and GIGEN. Residue glutamate 382 coordinates Mg(2+).

It belongs to the acetokinase family. In terms of assembly, homodimer. It depends on Mg(2+) as a cofactor. The cofactor is Mn(2+).

The protein resides in the cytoplasm. The catalysed reaction is acetate + ATP = acetyl phosphate + ADP. The protein operates within metabolic intermediate biosynthesis; acetyl-CoA biosynthesis; acetyl-CoA from acetate: step 1/2. Catalyzes the formation of acetyl phosphate from acetate and ATP. Can also catalyze the reverse reaction. In Anoxybacillus flavithermus (strain DSM 21510 / WK1), this protein is Acetate kinase.